The following is a 204-amino-acid chain: Ribosomal RNA small subunit methyltransferase G (204 aa).

Residues Gly73, Phe78, and Arg139 each coordinate S-adenosyl-L-methionine.

This sequence belongs to the methyltransferase superfamily. RNA methyltransferase RsmG family.

It is found in the cytoplasm. It carries out the reaction guanosine(527) in 16S rRNA + S-adenosyl-L-methionine = N(7)-methylguanosine(527) in 16S rRNA + S-adenosyl-L-homocysteine. In terms of biological role, specifically methylates the N7 position of guanine in position 527 of 16S rRNA. In Coxiella burnetii (strain Dugway 5J108-111), this protein is Ribosomal RNA small subunit methyltransferase G.